The sequence spans 187 residues: dTTP/UTP pyrophosphatase (187 aa).

D64 acts as the Proton acceptor in catalysis.

This sequence belongs to the Maf family. YhdE subfamily. A divalent metal cation serves as cofactor.

The protein localises to the cytoplasm. The catalysed reaction is dTTP + H2O = dTMP + diphosphate + H(+). It carries out the reaction UTP + H2O = UMP + diphosphate + H(+). Nucleoside triphosphate pyrophosphatase that hydrolyzes dTTP and UTP. May have a dual role in cell division arrest and in preventing the incorporation of modified nucleotides into cellular nucleic acids. The protein is dTTP/UTP pyrophosphatase of Leptospira interrogans serogroup Icterohaemorrhagiae serovar Lai (strain 56601).